The following is an 85-amino-acid chain: CDC42 small effector protein homolog (85 aa).

Residues cysteine 14 and cysteine 15 are each lipidated (S-palmitoyl cysteine). The CRIB domain occupies 37–50 (IGNPTNFVHTGHIG). Phosphoserine is present on residues serine 78 and serine 81.

The protein belongs to the CDC42SE/SPEC family.

The protein localises to the cytoplasm. It is found in the cytoskeleton. It localises to the cell membrane. In terms of biological role, probably involved in the organization of the actin cytoskeleton by acting downstream of CDC42, inducing actin filament assembly. This chain is CDC42 small effector protein homolog (Spec2), found in Drosophila melanogaster (Fruit fly).